The following is a 792-amino-acid chain: Alpha-1,6-mannosylglycoprotein 6-beta-N-acetylglucosaminyltransferase B (792 aa).

The Cytoplasmic portion of the chain corresponds to 1–24; sequence MITVNPDGKIMVRRCLVTLRPFRL. The chain crosses the membrane as a helical; Signal-anchor for type II membrane protein span at residues 25–45; the sequence is FVLGIGFFTLCFLMTSLGGQF. Residues 46 to 792 are Lumenal-facing; it reads SARRLGDSPF…GQVALCQGCL (747 aa). Asparagine 127 carries an N-linked (GlcNAc...) asparagine glycan. 4 disulfides stabilise this stretch: cysteine 157-cysteine 195, cysteine 168-cysteine 208, cysteine 184-cysteine 353, and cysteine 387-cysteine 644. A glycan (N-linked (GlcNAc...) asparagine) is linked at asparagine 675. Intrachain disulfides connect cysteine 700–cysteine 775, cysteine 704–cysteine 777, cysteine 711–cysteine 764, cysteine 732–cysteine 753, and cysteine 788–cysteine 791.

This sequence belongs to the glycosyltransferase 18 family. It depends on Mn(2+) as a cofactor. As to expression, present in brain (at protein level). Predominantly expressed in hippocampus, superficial layers of the brain cortex, striatum, nucleus accumbens, a subset of nuclei in the thalamus, inferior colliculus, brain stem and cerebellum.

Its subcellular location is the golgi apparatus membrane. It catalyses the reaction N(4)-{beta-D-GlcNAc-(1-&gt;2)-[beta-D-GlcNAc-(1-&gt;4)]-alpha-D-Man-(1-&gt;3)-[beta-D-GlcNAc-(1-&gt;2)-alpha-D-Man-(1-&gt;6)]-beta-D-Man-(1-&gt;4)-beta-D-GlcNAc-(1-&gt;4)-beta-D-GlcNAc}-L-asparaginyl-[protein] + UDP-N-acetyl-alpha-D-glucosamine = N(4)-{beta-D-GlcNAc-(1-&gt;2)-[beta-D-GlcNAc-(1-&gt;4)]-alpha-D-Man-(1-&gt;3)-[beta-D-GlcNAc-(1-&gt;2)-[beta-D-GlcNAc-(1-&gt;6)]-alpha-D-Man-(1-&gt;6)]-beta-D-Man-(1-&gt;4)-beta-D-GlcNAc-(1-&gt;4)-beta-D-GlcNAc}-L-asparaginyl-[protein] + UDP + H(+). The catalysed reaction is 3-O-[N-acetyl-beta-D-glucosaminyl-(1-&gt;2)-alpha-D-mannosyl]-L-seryl-[protein] + UDP-N-acetyl-alpha-D-glucosamine = O(3)-{N-acetyl-beta-D-glucosaminyl-(1-&gt;2)-[N-acetyl-beta-D-glucosaminyl-(1-&gt;6)]-alpha-D-mannosyl}-L-seryl-[protein] + UDP + H(+). It carries out the reaction 3-O-[N-acetyl-beta-D-glucosaminyl-(1-&gt;2)-alpha-D-mannosyl]-L-threonyl-[protein] + UDP-N-acetyl-alpha-D-glucosamine = O(3)-{N-acetyl-beta-D-glucosaminyl-(1-&gt;2)-[N-acetyl-beta-D-glucosaminyl-(1-&gt;6)]-alpha-D-mannosyl}-L-threonyl-[protein] + UDP + H(+). The protein operates within protein modification; protein glycosylation. Glycosyltransferase that acts on alpha-linked mannose of N-glycans and O-mannosyl glycans. Catalyzes the transfer of N-acetylglucosamine (GlcNAc) to the beta 1-6 linkage of the mannose residue of GlcNAc-beta1,2-Man-alpha on both the alpha1,3- and alpha1,6-linked mannose arms in the core structure of N-glycan. Also acts on the GlcNAc-beta1,2-Man-alpha1-Ser/Thr moiety, forming a 2,6-branched structure in brain O-mannosyl glycan. Plays an active role in modulating integrin and laminin-dependent adhesion and migration of neuronal cells via its activity in the O-mannosyl glycan pathway. This Mus musculus (Mouse) protein is Alpha-1,6-mannosylglycoprotein 6-beta-N-acetylglucosaminyltransferase B (Mgat5b).